A 127-amino-acid chain; its full sequence is Fluoride-specific ion channel FluC (127 aa).

4 helical membrane passes run 4–24 (LLLAVFIGGGTGSVARWLLSM), 35–55 (LGTLAANLIGAFIIGMGFAWF), 71–91 (TGFCGGLTTFSTFSAEVVFLL), and 103–123 (VFVNLLGSFAMTALAFWLFSA). Na(+) contacts are provided by Gly-75 and Thr-78.

Belongs to the fluoride channel Fluc/FEX (TC 1.A.43) family.

Its subcellular location is the cell inner membrane. It catalyses the reaction fluoride(in) = fluoride(out). Na(+) is not transported, but it plays an essential structural role and its presence is essential for fluoride channel function. Fluoride-specific ion channel. Important for reducing fluoride concentration in the cell, thus reducing its toxicity. This Escherichia coli O17:K52:H18 (strain UMN026 / ExPEC) protein is Fluoride-specific ion channel FluC.